A 105-amino-acid chain; its full sequence is MIVCTTENIAGYRIDKTFGEVFGLTTRSRNLVRTFGAGLKTLVGGEVVTWTQLQDQARLEAIERLKNNADKIGANAVTMMRFDSNEANGIMSVVAYGTAVKVSEL.

This sequence belongs to the UPF0145 family.

The sequence is that of UPF0145 protein OEOE_0637 from Oenococcus oeni (strain ATCC BAA-331 / PSU-1).